The chain runs to 167 residues: Phosphopantetheine adenylyltransferase (167 aa).

Ser-9 is a substrate binding site. ATP contacts are provided by residues 9-10 (SF) and His-17. Positions 41, 78, and 92 each coordinate substrate. ATP-binding positions include 93–95 (GLR), Glu-103, and 128–134 (SRPITAT).

The protein belongs to the bacterial CoaD family. In terms of assembly, homohexamer. Mg(2+) is required as a cofactor.

It is found in the cytoplasm. It catalyses the reaction (R)-4'-phosphopantetheine + ATP + H(+) = 3'-dephospho-CoA + diphosphate. The protein operates within cofactor biosynthesis; coenzyme A biosynthesis; CoA from (R)-pantothenate: step 4/5. Its function is as follows. Reversibly transfers an adenylyl group from ATP to 4'-phosphopantetheine, yielding dephospho-CoA (dPCoA) and pyrophosphate. This chain is Phosphopantetheine adenylyltransferase, found in Rhizobium rhizogenes (strain K84 / ATCC BAA-868) (Agrobacterium radiobacter).